The following is a 142-amino-acid chain: NADH-quinone oxidoreductase subunit A 2 (142 aa).

3 helical membrane passes run 18–38 (FLPLALYTLAASILIGVLLLA), 73–93 (FYLIAIFFIVFDVEAAFIFAW), and 104–124 (GLVHITFFIVILLLGLVWLWL).

Belongs to the complex I subunit 3 family. NDH-1 is composed of 14 different subunits. Subunits NuoA, H, J, K, L, M, N constitute the membrane sector of the complex.

Its subcellular location is the cell inner membrane. The enzyme catalyses a quinone + NADH + 5 H(+)(in) = a quinol + NAD(+) + 4 H(+)(out). Functionally, NDH-1 shuttles electrons from NADH, via FMN and iron-sulfur (Fe-S) centers, to quinones in the respiratory chain. The immediate electron acceptor for the enzyme in this species is believed to be ubiquinone. Couples the redox reaction to proton translocation (for every two electrons transferred, four hydrogen ions are translocated across the cytoplasmic membrane), and thus conserves the redox energy in a proton gradient. This chain is NADH-quinone oxidoreductase subunit A 2, found in Geobacter sulfurreducens (strain ATCC 51573 / DSM 12127 / PCA).